Consider the following 229-residue polypeptide: Uracil-DNA glycosylase (229 aa).

The active-site Proton acceptor is the Asp-64.

It belongs to the uracil-DNA glycosylase (UDG) superfamily. UNG family.

It is found in the cytoplasm. The enzyme catalyses Hydrolyzes single-stranded DNA or mismatched double-stranded DNA and polynucleotides, releasing free uracil.. Its function is as follows. Excises uracil residues from the DNA which can arise as a result of misincorporation of dUMP residues by DNA polymerase or due to deamination of cytosine. This Salmonella agona (strain SL483) protein is Uracil-DNA glycosylase.